We begin with the raw amino-acid sequence, 221 residues long: Endonuclease V (221 aa).

Mg(2+) is bound by residues Asp38 and Asp104.

It belongs to the endonuclease V family. Mg(2+) is required as a cofactor.

It is found in the cytoplasm. The enzyme catalyses Endonucleolytic cleavage at apurinic or apyrimidinic sites to products with a 5'-phosphate.. DNA repair enzyme involved in the repair of deaminated bases. Selectively cleaves double-stranded DNA at the second phosphodiester bond 3' to a deoxyinosine leaving behind the intact lesion on the nicked DNA. Recognizes only deoxyinosine. In Archaeoglobus fulgidus (strain ATCC 49558 / DSM 4304 / JCM 9628 / NBRC 100126 / VC-16), this protein is Endonuclease V.